We begin with the raw amino-acid sequence, 33 residues long: Fatty acid-binding protein, intestinal (33 aa).

Belongs to the calycin superfamily. Fatty-acid binding protein (FABP) family. Intestine.

It is found in the cytoplasm. FABPs are thought to play a role in the intracellular transport of long-chain fatty acids and their acyl-CoA esters. This Rhamdia sapo (South American catfish) protein is Fatty acid-binding protein, intestinal (fabp2).